We begin with the raw amino-acid sequence, 158 residues long: SsrA-binding protein (158 aa).

Belongs to the SmpB family.

The protein localises to the cytoplasm. Its function is as follows. Required for rescue of stalled ribosomes mediated by trans-translation. Binds to transfer-messenger RNA (tmRNA), required for stable association of tmRNA with ribosomes. tmRNA and SmpB together mimic tRNA shape, replacing the anticodon stem-loop with SmpB. tmRNA is encoded by the ssrA gene; the 2 termini fold to resemble tRNA(Ala) and it encodes a 'tag peptide', a short internal open reading frame. During trans-translation Ala-aminoacylated tmRNA acts like a tRNA, entering the A-site of stalled ribosomes, displacing the stalled mRNA. The ribosome then switches to translate the ORF on the tmRNA; the nascent peptide is terminated with the 'tag peptide' encoded by the tmRNA and targeted for degradation. The ribosome is freed to recommence translation, which seems to be the essential function of trans-translation. The protein is SsrA-binding protein of Buchnera aphidicola subsp. Baizongia pistaciae (strain Bp).